Consider the following 267-residue polypeptide: C-type lectin domain family 12 member A (267 aa).

Topologically, residues 1-43 (MSEEIVYANLKIQDPDKKEETQKSDKCGGKVSADASHSQQKTV) are cytoplasmic. The ITIM motif signature appears at 5 to 10 (IVYANL). Phosphotyrosine is present on tyrosine 7. Residues 44–64 (LILILLCLLLFIGMGVLGGIF) traverse the membrane as a helical; Signal-anchor for type II membrane protein segment. At 65 to 267 (YTTLATEMIK…VLNGLPEDSR (203 aa)) the chain is on the extracellular side. Asparagine 98 and asparagine 105 each carry an N-linked (GlcNAc...) asparagine glycan. Intrachain disulfides connect cysteine 118-cysteine 130, cysteine 133-cysteine 144, cysteine 161-cysteine 246, and cysteine 225-cysteine 238. A C-type lectin domain is found at 140–247 (YKDSCYSQLN…CTDENNIICE (108 aa)). Residue asparagine 165 is glycosylated (N-linked (GlcNAc...) asparagine).

As to quaternary structure, homodimer; disulfide-linked. Interacts (when the ITIM motif is phosphorylated) with PTPN6 and PTPN11. Phosphorylated at Tyr-7 by SRC in the ITIM motif following ligand-binding, promoting recruitment of tyrosine-protein phosphatases PTPN6 and PTPN11. Mainly expressed in lymphoid tissues. Preferentially expressed in peripheral blood leukocytes; less frequent in thymus, spleen, heart, brain and lung; and undetectable in other tissues.

The protein resides in the cell membrane. Functionally, myeloid inhibitory C-type lectin receptor that acts as a negative regulator of myeloid cell activation. Myeloid cell inhibition is required to limit proinflammatory pathways and protect against excessive inflammation. Specifically recognizes and binds various structures, such as neutrophil extracellular traps (NETs) or monosodium urate crystals. Also acts as a pattern-recognition receptor for pathogen-associated molecules, such as plasmodium hemozoin or mycobacterial micolic acid. Ligand-binding induces phosphorylation of its ITIM motif, followed by recruitment of tyrosine-protein phosphatases PTPN6 and PTPN11, which counteract tyrosine-protein kinase SYK, thereby preventing myeloid cell activation. Acts as a pattern-recognition receptor for NETs in neutrophils: specifically recognizes DNA in NETs, leading to inhibit neutrophil activation and limit further NET formation. This regulation is essential for controlling key neutrophil responses and limit NET-mediated inflammatory conditions. Also recognizes dead cells by acting as a receptor for monosodium urate crystals, leading to down-regulate neutrophil activation. Binding to monosodium urate crystals also promotes the type I interferon response. Acts as an inhibitor of natural killer (NK) cell cytotoxicity. Also acts as an ihibitor of dendritic cell maturation in an IL10-dependent manner. The protein is C-type lectin domain family 12 member A of Mus musculus (Mouse).